The following is a 497-amino-acid chain: Probable malate:quinone oxidoreductase (497 aa).

The protein belongs to the MQO family. It depends on FAD as a cofactor.

It catalyses the reaction (S)-malate + a quinone = a quinol + oxaloacetate. It functions in the pathway carbohydrate metabolism; tricarboxylic acid cycle; oxaloacetate from (S)-malate (quinone route): step 1/1. The polypeptide is Probable malate:quinone oxidoreductase (Hahella chejuensis (strain KCTC 2396)).